The following is a 136-amino-acid chain: Large ribosomal subunit protein uL16 (136 aa).

The protein belongs to the universal ribosomal protein uL16 family. Part of the 50S ribosomal subunit.

Binds 23S rRNA and is also seen to make contacts with the A and possibly P site tRNAs. This chain is Large ribosomal subunit protein uL16, found in Serratia proteamaculans (strain 568).